Reading from the N-terminus, the 319-residue chain is Chromoplast-specific carotenoid-associated protein C2, chromoplastic (319 aa).

Residues 1 to 55 (MTSIAFCNAFTVNPFLAAARRSPPPLTPLTSVALSPARKPRILAIFHPRTFPSFR) constitute a chromoplast transit peptide.

This sequence belongs to the PAP/fibrillin family.

The protein resides in the plastid. It is found in the chromoplast. Its function is as follows. May be involved in carotenoid sequestration within chromoplasts. This chain is Chromoplast-specific carotenoid-associated protein C2, chromoplastic (CHRC2), found in Oncidium hybrid cultivar (Orchid).